The primary structure comprises 762 residues: 5-methyltetrahydropteroyltriglutamate--homocysteine methyltransferase (762 aa).

5-methyltetrahydropteroyltri-L-glutamate-binding positions include R18 to K21 and K112. L-homocysteine is bound by residues I435–S437 and E488. Residues I435–S437 and E488 each bind L-methionine. Residues R519–C520 and W565 contribute to the 5-methyltetrahydropteroyltri-L-glutamate site. Residue D603 coordinates L-homocysteine. Residue D603 participates in L-methionine binding. Residue E609 participates in 5-methyltetrahydropteroyltri-L-glutamate binding. Residues H645, C647, and E669 each contribute to the Zn(2+) site. H698 functions as the Proton donor in the catalytic mechanism. Residue C730 coordinates Zn(2+).

This sequence belongs to the vitamin-B12 independent methionine synthase family. Zn(2+) serves as cofactor.

It carries out the reaction 5-methyltetrahydropteroyltri-L-glutamate + L-homocysteine = tetrahydropteroyltri-L-glutamate + L-methionine. It participates in amino-acid biosynthesis; L-methionine biosynthesis via de novo pathway; L-methionine from L-homocysteine (MetE route): step 1/1. Functionally, catalyzes the transfer of a methyl group from 5-methyltetrahydrofolate to homocysteine resulting in methionine formation. This Bacillus licheniformis (strain ATCC 14580 / DSM 13 / JCM 2505 / CCUG 7422 / NBRC 12200 / NCIMB 9375 / NCTC 10341 / NRRL NRS-1264 / Gibson 46) protein is 5-methyltetrahydropteroyltriglutamate--homocysteine methyltransferase.